The primary structure comprises 139 residues: Type II methyltransferase M.AquIB (139 aa).

The region spanning 1-135 is the SAM-dependent MTase C5-type domain; that stretch reads MDIKNVHIKN…KAVSEQLLDV (135 aa). The interval 38-58 is disordered; it reads KTFGSTYRRLDPNQPSPTVTR.

The protein belongs to the class I-like SAM-binding methyltransferase superfamily. C5-methyltransferase family. In terms of assembly, heterodimer of an alpha and a beta subunit.

The catalysed reaction is a 2'-deoxycytidine in DNA + S-adenosyl-L-methionine = a 5-methyl-2'-deoxycytidine in DNA + S-adenosyl-L-homocysteine + H(+). Functionally, a methylase, recognizes the double-stranded sequence 5'-CYCGRG-3', methylates C-1 on both strands, and protects the DNA from cleavage by the AquI endonuclease. This is Type II methyltransferase M.AquIB (aquIMB) from Picosynechococcus sp. (strain ATCC 27264 / PCC 7002 / PR-6) (Agmenellum quadruplicatum).